An 829-amino-acid chain; its full sequence is Potassium voltage-gated channel unc-103 (829 aa).

A disordered region spans residues 1 to 76 (MKTAVFGRDS…PRASHSSRRT (76 aa)). Residues 1–123 (MKTAVFGRDS…YSPFKAVWDW (123 aa)) lie on the Cytoplasmic side of the membrane. A compositionally biased stretch (gly residues) spans 46–66 (GVSGTGGGGSGGLQGAPGAGG). A helical membrane pass occupies residues 124–144 (IILLLVIYTAVFTPYVAAFLL). At 145-158 (RELQDTAKKSRFTE) the chain is on the extracellular side. A helical transmembrane segment spans residues 159-179 (PLEIVDLIVDIMFIVDIIINF). Topologically, residues 180-203 (RTTYVNENDEACQVVSDPGKIATH) are cytoplasmic. The chain crosses the membrane as a helical span at residues 204-224 (YFKGWFIIDMVAAVPFDLLLV). Residues 225–234 (STNSDETTTL) lie on the Extracellular side of the membrane. The helical; Voltage-sensor transmembrane segment at 235–255 (IGLLKTARLLRLVRVARKLDR) threads the bilayer. Residues 256 to 261 (YSEYGA) lie on the Cytoplasmic side of the membrane. The helical transmembrane segment at 262–282 (AVLLLLMATFALIAHWLACIW) threads the bilayer. Residues 283-327 (YAIGSAELSHKEYTWLHQLSKQLAQPYTSTNGTIPTGGPTLKSRY) lie on the Extracellular side of the membrane. Asparagine 313 carries N-linked (GlcNAc...) asparagine glycosylation. Positions 328–348 (VTSLYFTLSTITSIGFGNVSA) form an intramembrane region, pore-forming. The Extracellular segment spans residues 349–354 (TTDSEK). A helical membrane pass occupies residues 355 to 375 (IFTIIMMILGSLMYASVFGNV). The Cytoplasmic portion of the chain corresponds to 376 to 829 (SAIIQRLYSG…TPTQETDTIL (454 aa)). 458 to 559 (AFAGSTPGCL…ILRDDLLDVL (102 aa)) contributes to the a nucleoside 3',5'-cyclic phosphate binding site. Residues 601-674 (SMNKDRYTTP…PLLRRSTNHH (74 aa)) form a disordered region. Residues 603-615 (NKDRYTTPPDGDH) are compositionally biased toward basic and acidic residues. A compositionally biased stretch (low complexity) spans 640 to 650 (SAGSRSSSRCS).

Belongs to the potassium channel family. H (Eag) (TC 1.A.1.20) subfamily. Kv11.1/KCNH2 sub-subfamily. In terms of assembly, the potassium channel is composed of a homo- or heterotetrameric complex. Interacts with dnj-1; dnj-1 chaperone promotes tetramerization.

The protein localises to the cell membrane. Pore-forming (alpha) subunit of voltage-gated inwardly rectifying potassium channel. Channel properties are modulated by cAMP and subunit assembly. Regulates the movements of the male's copulatory spicules before and during male mating behavior. The chain is Potassium voltage-gated channel unc-103 from Caenorhabditis elegans.